Consider the following 180-residue polypeptide: Ribosome rescue factor SmrB (180 aa).

Residues 98-173 (LDLHGLTQLQ…GNAALLVLVA (76 aa)) enclose the Smr domain.

It belongs to the SmrB family. As to quaternary structure, associates with collided ribosomes, but not with correctly translating polysomes.

Functionally, acts as a ribosome collision sensor. Detects stalled/collided disomes (pairs of ribosomes where the leading ribosome is stalled and a second ribosome has collided with it) and endonucleolytically cleaves mRNA at the 5' boundary of the stalled ribosome. Stalled/collided disomes form a new interface (primarily via the 30S subunits) that binds SmrB. Cleaved mRNA becomes available for tmRNA ligation, leading to ribosomal subunit dissociation and rescue of stalled ribosomes. This is Ribosome rescue factor SmrB from Pectobacterium carotovorum subsp. carotovorum (strain PC1).